Reading from the N-terminus, the 355-residue chain is Holliday junction branch migration complex subunit RuvB (355 aa).

Residues 4–190 form a large ATPase domain (RuvB-L) region; the sequence is TDKLAAERII…FGIVARLEFY (187 aa). Residues L29, R30, G71, K74, T75, T76, 137–139, R180, Y190, and R227 contribute to the ATP site; that span reads EDY. T75 contacts Mg(2+). The segment at 191–261 is small ATPAse domain (RuvB-S); it reads DADQLSRIVQ…IADAALAMLD (71 aa). Positions 264-355 are head domain (RuvB-H); sequence PVGFDLMDRK…QSIWDTPDAQ (92 aa). DNA-binding residues include R300, R319, and R324.

The protein belongs to the RuvB family. As to quaternary structure, homohexamer. Forms an RuvA(8)-RuvB(12)-Holliday junction (HJ) complex. HJ DNA is sandwiched between 2 RuvA tetramers; dsDNA enters through RuvA and exits via RuvB. An RuvB hexamer assembles on each DNA strand where it exits the tetramer. Each RuvB hexamer is contacted by two RuvA subunits (via domain III) on 2 adjacent RuvB subunits; this complex drives branch migration. In the full resolvosome a probable DNA-RuvA(4)-RuvB(12)-RuvC(2) complex forms which resolves the HJ.

It is found in the cytoplasm. It catalyses the reaction ATP + H2O = ADP + phosphate + H(+). In terms of biological role, the RuvA-RuvB-RuvC complex processes Holliday junction (HJ) DNA during genetic recombination and DNA repair, while the RuvA-RuvB complex plays an important role in the rescue of blocked DNA replication forks via replication fork reversal (RFR). RuvA specifically binds to HJ cruciform DNA, conferring on it an open structure. The RuvB hexamer acts as an ATP-dependent pump, pulling dsDNA into and through the RuvAB complex. RuvB forms 2 homohexamers on either side of HJ DNA bound by 1 or 2 RuvA tetramers; 4 subunits per hexamer contact DNA at a time. Coordinated motions by a converter formed by DNA-disengaged RuvB subunits stimulates ATP hydrolysis and nucleotide exchange. Immobilization of the converter enables RuvB to convert the ATP-contained energy into a lever motion, pulling 2 nucleotides of DNA out of the RuvA tetramer per ATP hydrolyzed, thus driving DNA branch migration. The RuvB motors rotate together with the DNA substrate, which together with the progressing nucleotide cycle form the mechanistic basis for DNA recombination by continuous HJ branch migration. Branch migration allows RuvC to scan DNA until it finds its consensus sequence, where it cleaves and resolves cruciform DNA. The chain is Holliday junction branch migration complex subunit RuvB from Burkholderia multivorans (strain ATCC 17616 / 249).